The chain runs to 408 residues: D-galactonate dehydratase family member OG2516_05608 (408 aa).

Residue D215 coordinates Mg(2+). H217 lines the D-arabinonate pocket. Mg(2+) contacts are provided by E241 and E267. E267, R288, H317, and E344 together coordinate D-arabinonate.

The protein belongs to the mandelate racemase/muconate lactonizing enzyme family. GalD subfamily.

Its function is as follows. Has no detectable activity with D-mannonate and with a panel of 70 other acid sugars (in vitro), in spite of the conservation of the residues that are expected to be important for catalytic activity and cofactor binding. May have evolved a divergent function. The protein is D-galactonate dehydratase family member OG2516_05608 of Oceanicola granulosus (strain ATCC BAA-861 / DSM 15982 / KCTC 12143 / HTCC2516).